The following is a 215-amino-acid chain: Glutathione S-transferase-like protein (215 aa).

One can recognise a GST N-terminal domain in the interval 1 to 76; that stretch reads MPNARILKIQ…YVAASGPAAP (76 aa). Residues 82–215 form the GST C-terminal domain; that stretch reads NVAEQAAVRQ…LVAVRKEASV (134 aa).

This sequence belongs to the GST superfamily.

In Aspergillus aculeatus (strain ATCC 16872 / CBS 172.66 / WB 5094), this protein is Glutathione S-transferase-like protein.